The following is a 366-amino-acid chain: Chorismate synthase (366 aa).

Residue Arg48 participates in NADP(+) binding. FMN contacts are provided by residues 125-127, 241-242, Gly285, 300-304, and Arg326; these read RSS, NA, and KPTSS.

Belongs to the chorismate synthase family. In terms of assembly, homotetramer. FMNH2 serves as cofactor.

It carries out the reaction 5-O-(1-carboxyvinyl)-3-phosphoshikimate = chorismate + phosphate. It participates in metabolic intermediate biosynthesis; chorismate biosynthesis; chorismate from D-erythrose 4-phosphate and phosphoenolpyruvate: step 7/7. Catalyzes the anti-1,4-elimination of the C-3 phosphate and the C-6 proR hydrogen from 5-enolpyruvylshikimate-3-phosphate (EPSP) to yield chorismate, which is the branch point compound that serves as the starting substrate for the three terminal pathways of aromatic amino acid biosynthesis. This reaction introduces a second double bond into the aromatic ring system. The protein is Chorismate synthase of Ruegeria pomeroyi (strain ATCC 700808 / DSM 15171 / DSS-3) (Silicibacter pomeroyi).